Here is a 237-residue protein sequence, read N- to C-terminus: Placenta-expressed transcript 1 protein (237 aa).

The signal sequence occupies residues Met1–Ala27. N-linked (GlcNAc...) asparagine glycans are attached at residues Asn30, Asn67, Asn103, and Asn136. The segment covering Lys145–Glu162 has biased composition (polar residues). A disordered region spans residues Lys145–Thr170. The GPI-anchor amidated serine moiety is linked to residue Ser218. Positions Pro219–Phe237 are cleaved as a propeptide — removed in mature form.

N-glycosylated. Post-translationally, GPI-anchored. As to expression, present in hair follicle cells and sebaceous gland of skin, ciliated epithelial cells of trachea and bronchial tube, striated portion of submandibular gland, distal convoluted tubule cells of kidney, ciliated epithelial cells of oviduct, medulla of adrenal gland and anterior lobe of pituitary gland. Expressed in keratinocytes of the hair follicle at the trichilemmal zone corresponding to the terminally differentiated outermost suprabasal outer root sheath (ORS), including that of the sebaceous gland duct (SGD) and the directly adjacent upper distal end of the companion layer (CL). Expression is similar in all hair follicle growth stages. Also detected during both the early and late anagen phases above the bulge of stem cells. Expressed at the leading edge of the epidermal wound. Not expressed in the interfollicular epidermis (IFE), inner root sheath (IRS) and hair fiber. Highly expressed in placenta. Detected in mammary and prostate epithelia and in the pancreas (at protein level).

Its subcellular location is the apical cell membrane. Functionally, modulates leading keratinocyte migration and cellular adhesion to matrix proteins during a wound-healing response and promotes wound repair. May play a role during trichilemmal differentiation of the hair follicle. The sequence is that of Placenta-expressed transcript 1 protein (Plet1) from Mus musculus (Mouse).